Reading from the N-terminus, the 93-residue chain is Defensin-like protein 210 (93 aa).

An N-terminal signal peptide occupies residues 1 to 19; it reads MKTIILFLTLLVISSSCTS. 3 disulfides stabilise this stretch: Cys63/Cys80, Cys66/Cys85, and Cys70/Cys87.

The protein belongs to the DEFL family.

The protein resides in the secreted. This is Defensin-like protein 210 from Arabidopsis thaliana (Mouse-ear cress).